The primary structure comprises 320 residues: Methionyl-tRNA formyltransferase (320 aa).

A (6S)-5,6,7,8-tetrahydrofolate-binding site is contributed by 114-117 (SLLP).

Belongs to the Fmt family.

It carries out the reaction L-methionyl-tRNA(fMet) + (6R)-10-formyltetrahydrofolate = N-formyl-L-methionyl-tRNA(fMet) + (6S)-5,6,7,8-tetrahydrofolate + H(+). In terms of biological role, attaches a formyl group to the free amino group of methionyl-tRNA(fMet). The formyl group appears to play a dual role in the initiator identity of N-formylmethionyl-tRNA by promoting its recognition by IF2 and preventing the misappropriation of this tRNA by the elongation apparatus. The polypeptide is Methionyl-tRNA formyltransferase (Acinetobacter baumannii (strain AB0057)).